The primary structure comprises 254 residues: CDP-diacylglycerol pyrophosphatase (254 aa).

A helical membrane pass occupies residues 6–26; the sequence is YFLLALLVAILAALAGGYYWL.

Belongs to the Cdh family.

It localises to the cell inner membrane. The enzyme catalyses a CDP-1,2-diacyl-sn-glycerol + H2O = a 1,2-diacyl-sn-glycero-3-phosphate + CMP + 2 H(+). The protein operates within phospholipid metabolism; CDP-diacylglycerol degradation; phosphatidate from CDP-diacylglycerol: step 1/1. This chain is CDP-diacylglycerol pyrophosphatase, found in Klebsiella pneumoniae (strain 342).